Here is a 126-residue protein sequence, read N- to C-terminus: uncharacterized protein (126 aa).

Positions 1–101 (MQASSEPANV…KSVGSQSADE (101 aa)) are disordered. Polar residues-rich tracts occupy residues 14–27 (GQNQ…STSP) and 86–99 (DTEA…SQSA).

This is an uncharacterized protein from Schizosaccharomyces pombe (strain 972 / ATCC 24843) (Fission yeast).